A 352-amino-acid polypeptide reads, in one-letter code: UDP-3-O-acylglucosamine N-acyltransferase (352 aa).

His246 functions as the Proton acceptor in the catalytic mechanism.

It belongs to the transferase hexapeptide repeat family. LpxD subfamily. In terms of assembly, homotrimer.

The catalysed reaction is a UDP-3-O-[(3R)-3-hydroxyacyl]-alpha-D-glucosamine + a (3R)-hydroxyacyl-[ACP] = a UDP-2-N,3-O-bis[(3R)-3-hydroxyacyl]-alpha-D-glucosamine + holo-[ACP] + H(+). The protein operates within bacterial outer membrane biogenesis; LPS lipid A biosynthesis. In terms of biological role, catalyzes the N-acylation of UDP-3-O-acylglucosamine using 3-hydroxyacyl-ACP as the acyl donor. Is involved in the biosynthesis of lipid A, a phosphorylated glycolipid that anchors the lipopolysaccharide to the outer membrane of the cell. The chain is UDP-3-O-acylglucosamine N-acyltransferase from Chlorobium luteolum (strain DSM 273 / BCRC 81028 / 2530) (Pelodictyon luteolum).